A 108-amino-acid polypeptide reads, in one-letter code: UPF0145 protein SYNPCC7002_A1337 (108 aa).

It belongs to the UPF0145 family.

The polypeptide is UPF0145 protein SYNPCC7002_A1337 (Picosynechococcus sp. (strain ATCC 27264 / PCC 7002 / PR-6) (Agmenellum quadruplicatum)).